A 97-amino-acid chain; its full sequence is Probable gamma-secretase subunit PEN-2 (97 aa).

The Cytoplasmic portion of the chain corresponds to 1-20; sequence MLIPEDDKLDDEKMINIAKK. The segment at residues 21–39 is an intramembrane region (helical); sequence LWFIGFFFLPWVWLINILY. Topologically, residues 40-55 are cytoplasmic; it reads FIPYRNSLNDKVKWYL. A helical membrane pass occupies residues 56-76; the sequence is KFSLIGFLGYSTIFMGWMGIY. Residues 77 to 97 lie on the Lumenal side of the membrane; the sequence is LVNRNKWGAFGDDISITIPFG.

Belongs to the PEN-2 family. As to quaternary structure, the functional gamma-secretase complex is composed of at least four polypeptides: a presenilin homodimer, nicastrin, aph1 and psenen.

The protein localises to the endoplasmic reticulum membrane. It is found in the golgi apparatus. Its subcellular location is the golgi stack membrane. It localises to the cell membrane. The protein resides in the membrane. Essential subunit of the gamma-secretase complex, an endoprotease complex that catalyzes the intramembrane cleavage of integral membrane proteins such as Notch receptors. The gamma-secretase complex plays a role in Notch and Wnt signaling cascades and regulation of downstream processes via its role in processing key regulatory proteins. This chain is Probable gamma-secretase subunit PEN-2 (psenen), found in Dictyostelium discoideum (Social amoeba).